Reading from the N-terminus, the 435-residue chain is GTPase Obg (435 aa).

The 158-residue stretch at 1–158 folds into the Obg domain; that stretch reads MFLDTAKVSV…RQLELELKIL (158 aa). In terms of domain architecture, OBG-type G spans 159–336; that stretch reads ADVGLVGFPS…LLEATAELLA (178 aa). Residues 165–172, 190–194, 212–215, 282–285, and 317–319 each bind GTP; these read GFPSVGKS, FTTIV, DLPG, NKMD, and SSL. Positions 172 and 192 each coordinate Mg(2+). The OCT domain maps to 357-435; that stretch reads GFAAEEKAFE…IGKFEFEFVD (79 aa).

Belongs to the TRAFAC class OBG-HflX-like GTPase superfamily. OBG GTPase family. In terms of assembly, monomer. It depends on Mg(2+) as a cofactor.

The protein resides in the cytoplasm. In terms of biological role, an essential GTPase which binds GTP, GDP and possibly (p)ppGpp with moderate affinity, with high nucleotide exchange rates and a fairly low GTP hydrolysis rate. Plays a role in control of the cell cycle, stress response, ribosome biogenesis and in those bacteria that undergo differentiation, in morphogenesis control. This chain is GTPase Obg, found in Streptococcus equi subsp. zooepidemicus (strain MGCS10565).